Consider the following 1402-residue polypeptide: DNA-directed RNA polymerase subunit beta' (1402 aa).

The Zn(2+) site is built by cysteine 71, cysteine 73, cysteine 86, and cysteine 89. Positions 462, 464, and 466 each coordinate Mg(2+). Zn(2+) contacts are provided by cysteine 811, cysteine 885, cysteine 892, and cysteine 895. Residues 1379–1402 (RKGTGAGSANQMLQDMTDQVPAAE) are disordered. Over residues 1385–1395 (GSANQMLQDMT) the composition is skewed to polar residues.

It belongs to the RNA polymerase beta' chain family. The RNAP catalytic core consists of 2 alpha, 1 beta, 1 beta' and 1 omega subunit. When a sigma factor is associated with the core the holoenzyme is formed, which can initiate transcription. Mg(2+) serves as cofactor. Requires Zn(2+) as cofactor.

The catalysed reaction is RNA(n) + a ribonucleoside 5'-triphosphate = RNA(n+1) + diphosphate. Its function is as follows. DNA-dependent RNA polymerase catalyzes the transcription of DNA into RNA using the four ribonucleoside triphosphates as substrates. This Agrobacterium fabrum (strain C58 / ATCC 33970) (Agrobacterium tumefaciens (strain C58)) protein is DNA-directed RNA polymerase subunit beta'.